The chain runs to 241 residues: Orotidine 5'-phosphate decarboxylase (241 aa).

Residues Asp16, Lys37, 64–73, Thr128, Arg190, Gln199, Gly219, and Arg220 each bind substrate; that span reads DLKFHDIPTT. The active-site Proton donor is Lys66.

This sequence belongs to the OMP decarboxylase family. Type 1 subfamily. In terms of assembly, homodimer.

The enzyme catalyses orotidine 5'-phosphate + H(+) = UMP + CO2. It functions in the pathway pyrimidine metabolism; UMP biosynthesis via de novo pathway; UMP from orotate: step 2/2. In terms of biological role, catalyzes the decarboxylation of orotidine 5'-monophosphate (OMP) to uridine 5'-monophosphate (UMP). This Prochlorococcus marinus (strain NATL2A) protein is Orotidine 5'-phosphate decarboxylase.